Here is a 256-residue protein sequence, read N- to C-terminus: MQIKIGEVESKLNKIIEEDGAAYFVLIDPDEKNYREIANHVKNYADAIIIGGSIGIISLDEVTKEIKEITGLPVILFPGNVDGVTKEADAVLFMTLMNSKNTYWNMTAPTLGALTIKKYGLETLPMAYLGIEPISKTAVGFVGEVNEIPQKKPEIAGIYSLSASYFGMRWVYLEAGSGAEYPVNNEMIGISKKLSGINIIVGGGIRTPEVAYEKVMSGADVIVTGTLTEKDPEAVKEMKKAIKKAGMDKLKMLSKK.

The Mg(2+) site is built by aspartate 28 and serine 53. Residues 172–178 (YLEAGSG), 203–204 (GG), and 225–226 (GT) each bind sn-glycerol 1-phosphate.

This sequence belongs to the GGGP/HepGP synthase family. Group II subfamily. It depends on Mg(2+) as a cofactor.

It localises to the cytoplasm. It catalyses the reaction sn-glycerol 1-phosphate + (2E,6E,10E)-geranylgeranyl diphosphate = sn-3-O-(geranylgeranyl)glycerol 1-phosphate + diphosphate. Its pathway is membrane lipid metabolism; glycerophospholipid metabolism. Its function is as follows. Prenyltransferase that catalyzes the transfer of the geranylgeranyl moiety of geranylgeranyl diphosphate (GGPP) to the C3 hydroxyl of sn-glycerol-1-phosphate (G1P). This reaction is the first ether-bond-formation step in the biosynthesis of archaeal membrane lipids. This Methanococcus maripaludis (strain C7 / ATCC BAA-1331) protein is Geranylgeranylglyceryl phosphate synthase.